A 101-amino-acid polypeptide reads, in one-letter code: Large ribosomal subunit protein uL23 (101 aa).

The protein belongs to the universal ribosomal protein uL23 family. Part of the 50S ribosomal subunit. Contacts protein L29, and trigger factor when it is bound to the ribosome.

Functionally, one of the early assembly proteins it binds 23S rRNA. One of the proteins that surrounds the polypeptide exit tunnel on the outside of the ribosome. Forms the main docking site for trigger factor binding to the ribosome. This is Large ribosomal subunit protein uL23 from Wigglesworthia glossinidia brevipalpis.